We begin with the raw amino-acid sequence, 185 residues long: GTP-dependent dephospho-CoA kinase (185 aa).

Positions 50, 52, 73, 75, and 128 each coordinate GTP.

Belongs to the GTP-dependent DPCK family.

It carries out the reaction 3'-dephospho-CoA + GTP = GDP + CoA + H(+). The protein operates within cofactor biosynthesis; coenzyme A biosynthesis. Functionally, catalyzes the GTP-dependent phosphorylation of the 3'-hydroxyl group of dephosphocoenzyme A to form coenzyme A (CoA). The polypeptide is GTP-dependent dephospho-CoA kinase (Aeropyrum pernix (strain ATCC 700893 / DSM 11879 / JCM 9820 / NBRC 100138 / K1)).